The sequence spans 970 residues: Transcriptional activator protein DAL81 (970 aa).

3 disordered regions span residues 1–44 (MDPH…NHDI), 64–95 (NILR…QQQS), and 118–140 (DNVS…NNDI). 3 stretches are compositionally biased toward low complexity: residues 15 to 41 (TKSV…NNSN), 73 to 94 (QQQQ…QQQQ), and 121 to 140 (SNSA…NNDI). The zn(2)-C6 fungal-type DNA-binding region spans 150–179 (CNQCRLKKTKCNYFPDLGNCLECETSRTKC). Residues 807-823 (SFPNGTTSTTTPVNPTS) are compositionally biased toward low complexity. The segment at 807 to 970 (SFPNGTTSTT…VTINTRETPL (164 aa)) is disordered. 2 stretches are compositionally biased toward polar residues: residues 824–836 (RQTQ…SPAI) and 858–870 (KTSQ…TPSH). Phosphoserine is present on Ser833. Residues 875 to 894 (PPSNTSSPRVNSSTNVNSNT) are compositionally biased toward low complexity. A compositionally biased stretch (polar residues) spans 895-906 (QMNASPLTSINE). Positions 907–938 (TRQESGDAADEKTAGRERTANEESSTELKDDN) are enriched in basic and acidic residues. Composition is skewed to polar residues over residues 939 to 954 (PNSN…QTIK) and 961 to 970 (VTINTRETPL).

The protein resides in the nucleus. Its function is as follows. Positive regulation of genes required for catabolism of GABA (UGA4, UGA1, and UGA2), urea (DUR1 and DUR2), arginine and allantoin. In Saccharomyces cerevisiae (strain ATCC 204508 / S288c) (Baker's yeast), this protein is Transcriptional activator protein DAL81 (DAL81).